Reading from the N-terminus, the 20-residue chain is Cuticle-degrading protease-like protein (20 aa).

Residues 1 to 20 (AIVEQQGAPXGLGRIINKXK) are disordered.

It belongs to the peptidase S8 family.

It localises to the secreted. Its function is as follows. Capable of breaching the insect cuticle. The sequence is that of Cuticle-degrading protease-like protein from Metacordyceps chlamydosporia (Nematophagous fungus).